The chain runs to 95 residues: Protein Vpr (95 aa).

A homooligomerization region spans residues 1-42; it reads MEQAPEDQGPQREPYNEWALELLEDLKNEALRHFPRPWLHGL. Residues Ser-79, Ser-93, and Ser-95 each carry the phosphoserine; by host modification.

It belongs to the HIV-1 VPR protein family. In terms of assembly, homooligomer, may form homodimer. Interacts with p6-gag region of the Pr55 Gag precursor protein through a (Leu-X-X)4 motif near the C-terminus of the P6gag protein. Interacts with host UNG. May interact with host RAD23A/HHR23A. Interacts with host VPRBP/DCAF1, leading to hijack the CUL4A-RBX1-DDB1-DCAF1/VPRBP complex, mediating ubiquitination of host proteins such as TERT and ZGPAT and arrest of the cell cycle in G2 phase. Post-translationally, phosphorylated on several residues by host. These phosphorylations regulate VPR activity for the nuclear import of the HIV-1 pre-integration complex.

The protein resides in the virion. It localises to the host nucleus. It is found in the host extracellular space. In terms of biological role, during virus replication, may deplete host UNG protein, and incude G2-M cell cycle arrest. Acts by targeting specific host proteins for degradation by the 26S proteasome, through association with the cellular CUL4A-DDB1 E3 ligase complex by direct interaction with host VPRPB/DCAF-1. Cell cycle arrest reportedly occurs within hours of infection and is not blocked by antiviral agents, suggesting that it is initiated by the VPR carried into the virion. Additionally, VPR induces apoptosis in a cell cycle dependent manner suggesting that these two effects are mechanistically linked. Detected in the serum and cerebrospinal fluid of AIDS patient, VPR may also induce cell death to bystander cells. During virus entry, plays a role in the transport of the viral pre-integration (PIC) complex to the host nucleus. This function is crucial for viral infection of non-dividing macrophages. May act directly at the nuclear pore complex, by binding nucleoporins phenylalanine-glycine (FG)-repeat regions. The chain is Protein Vpr from Pan troglodytes (Chimpanzee).